We begin with the raw amino-acid sequence, 828 residues long: Periplasmic nitrate reductase (828 aa).

The tat-type signal signal peptide spans 1–31 (MKLSRRSFMKANAVAAAAAAAGLSVPGVARA). In terms of domain architecture, 4Fe-4S Mo/W bis-MGD-type spans 39 to 95 (IKWDKAPCRFCGTGCGVLVGTQQGRVVACQGDPDAPVNRGLNCIKGYFLPKIMYGKD). Positions 46, 49, 53, and 81 each coordinate [4Fe-4S] cluster. Mo-bis(molybdopterin guanine dinucleotide) is bound by residues K83, Q150, N175, C179, 212–219 (WGSNMAEM), 243–247 (STFQH), 262–264 (QSD), M372, Q376, N482, 508–509 (SD), K531, D558, and 718–727 (TGRVLEHWHT). Residue F794 participates in substrate binding. Residues N802 and K819 each coordinate Mo-bis(molybdopterin guanine dinucleotide).

The protein belongs to the prokaryotic molybdopterin-containing oxidoreductase family. NasA/NapA/NarB subfamily. Component of the periplasmic nitrate reductase NapAB complex composed of NapA and NapB. [4Fe-4S] cluster is required as a cofactor. It depends on Mo-bis(molybdopterin guanine dinucleotide) as a cofactor. Post-translationally, predicted to be exported by the Tat system. The position of the signal peptide cleavage has not been experimentally proven.

The protein resides in the periplasm. The catalysed reaction is 2 Fe(II)-[cytochrome] + nitrate + 2 H(+) = 2 Fe(III)-[cytochrome] + nitrite + H2O. Its function is as follows. Catalytic subunit of the periplasmic nitrate reductase complex NapAB. Receives electrons from NapB and catalyzes the reduction of nitrate to nitrite. The chain is Periplasmic nitrate reductase from Salmonella dublin (strain CT_02021853).